A 373-amino-acid polypeptide reads, in one-letter code: Stationary phase protein 5 (373 aa).

Required for survival at high temperature during stationary phase. The sequence is that of Stationary phase protein 5 (SPG5) from Saccharomyces cerevisiae (strain ATCC 204508 / S288c) (Baker's yeast).